A 547-amino-acid polypeptide reads, in one-letter code: Delta-guaiene synthase 2 (547 aa).

3 residues coordinate Mg(2+): Asp299, Asp303, and Asp444. The short motif at 299–303 (DDTYD) is the DDXXD motif element.

It belongs to the terpene synthase family. It depends on Mg(2+) as a cofactor.

It catalyses the reaction (2E,6E)-farnesyl diphosphate = delta-guaiene + diphosphate. The catalysed reaction is (2E,6E)-farnesyl diphosphate = alpha-guaiene + diphosphate. The protein operates within secondary metabolite biosynthesis; terpenoid biosynthesis. Functionally, sesquiterpene synthase involved in the biosynthesis of delta-guaiene (53.7%) and alpha-guaiene (44.6%), two structures composed of five- and seven-membered rings. Also produces 1.7% of alpha-humulene. The polypeptide is Delta-guaiene synthase 2 (C3) (Aquilaria crassna (Eagle wood)).